A 531-amino-acid chain; its full sequence is Probable peptide ABC transporter periplasmic-binding protein y4tO (531 aa).

A signal peptide (tat-type signal) is located at residues Met1 to Ala32.

This sequence belongs to the bacterial solute-binding protein 5 family. Post-translationally, predicted to be exported by the Tat system. The position of the signal peptide cleavage has not been experimentally proven.

It localises to the periplasm. Probably part of the binding-protein-dependent transport system y4tOPQRS for a peptide. This chain is Probable peptide ABC transporter periplasmic-binding protein y4tO, found in Sinorhizobium fredii (strain NBRC 101917 / NGR234).